We begin with the raw amino-acid sequence, 370 residues long: MLPRLICINDYEQHAKSVLPKSIYDYYRSGANDEETLADNIAAFSRWKLYPRMLRNVAETDLSTSVLGQRVSMPICVGATAMQRMAHVDGELATVRACQSLGTGMMLSSWATSSIEEVAEAGPEALRWLQLYIYKDREVTKKLVRQAEKMGYKAIFVTVDTPYLGNRLDDVRNRFKLPPQLRMKNFETSTLSFSPEENFGDDSGLAAYVAKAIDPSISWEDIKWLRRLTSLPIVAKGILRGDDAREAVKHGLNGILVSNHGARQLDGVPATIDVLPEIVEAVEGKVEVFLDGGVRKGTDVLKALALGAKAVFVGRPIVWGLAFQGEKGVQDVLEILKEEFRLAMALSGCQNVKVIDKTLVRKNPLAVSKI.

In terms of domain architecture, FMN hydroxy acid dehydrogenase spans 1 to 365 (MLPRLICIND…DKTLVRKNPL (365 aa)). A glyoxylate-binding site is contributed by tyrosine 26. FMN contacts are provided by residues 79 to 81 (ATA), serine 108, and glutamine 130. A glyoxylate-binding site is contributed by tyrosine 132. Threonine 158 contributes to the FMN binding site. Residue arginine 167 participates in glyoxylate binding. Lysine 184 bears the N6-succinyllysine mark. 2 positions are modified to phosphoserine: serine 194 and serine 230. Positions 236 and 258 each coordinate FMN. Residues histidine 260 and arginine 263 each contribute to the glyoxylate site. Histidine 260 (proton acceptor) is an active-site residue. Residues 291 to 295 (DGGVR) and 314 to 315 (GR) contribute to the FMN site. The Microbody targeting signal motif lies at 368–370 (SKI).

It belongs to the FMN-dependent alpha-hydroxy acid dehydrogenase family. Homotetramer. FMN serves as cofactor. As to expression, highly expressed in liver.

Its subcellular location is the peroxisome matrix. The enzyme catalyses a (2S)-2-hydroxycarboxylate + O2 = a 2-oxocarboxylate + H2O2. It catalyses the reaction glycolate + O2 = glyoxylate + H2O2. It carries out the reaction glyoxylate + O2 + H2O = oxalate + H2O2 + H(+). The catalysed reaction is 2-hydroxyhexadecanoate + O2 = 2-oxohexadecanoate + H2O2. The enzyme catalyses 2-hydroxyoctanoate + O2 = 2-oxooctanoate + H2O2. It participates in amino-acid biosynthesis; glycine biosynthesis. Its activity is regulated as follows. Inhibited by its product oxalate. Inhibited by high concentrations of dichlorophenolindophenol (DCIP) in vitro. Its function is as follows. Broad substrate specificity (S)-2-hydroxy-acid oxidase that preferentially oxidizes glycolate. The glyoxylate produced by the oxidation of glycolate can then be utilized by alanine-glyoxylate aminotransferase for the peroxisomal synthesis of glycine; this pathway appears to be an important step for the detoxification of glyoxylate which, if allowed to accumulate, may be metabolized to oxalate with formation of kidney stones. Can also catalyze the oxidation of glyoxylate, and long chain hydroxyacids such as 2-hydroxyhexadecanoate and 2-hydroxyoctanoate, albeit with much lower catalytic efficiency. Active in vitro with the artificial electron acceptor 2,6-dichlorophenolindophenol (DCIP), but O2 is believed to be the physiological electron acceptor, leading to the production of H2O2. Is not active on L-lactate and 2-hydroxybutanoate. This is 2-Hydroxyacid oxidase 1 from Homo sapiens (Human).